Reading from the N-terminus, the 124-residue chain is Fluoride-specific ion channel FluC (124 aa).

A run of 4 helical transmembrane segments spans residues 4–24, 34–54, 67–87, and 100–120; these read FLAVGFGAAVGAWLRWGLGLW, LGTLAANVIGGYFIGLVLAWF, FVITGLLGGLTTFSTFSAEVV, and LIAFAHLAGSFIATGLGFYSL. Na(+) is bound by residues G74 and T77.

This sequence belongs to the fluoride channel Fluc/FEX (TC 1.A.43) family.

It is found in the cell inner membrane. It catalyses the reaction fluoride(in) = fluoride(out). With respect to regulation, na(+) is not transported, but it plays an essential structural role and its presence is essential for fluoride channel function. Functionally, fluoride-specific ion channel. Important for reducing fluoride concentration in the cell, thus reducing its toxicity. The chain is Fluoride-specific ion channel FluC from Thiobacillus denitrificans (strain ATCC 25259 / T1).